A 552-amino-acid polypeptide reads, in one-letter code: Alcohol dehydrogenase [acceptor] (552 aa).

FAD is bound at residue 3-32; it reads DYIIVGAGSAGCVLANRLSADPSKRVCLLE. The active-site Proton acceptor is the histidine 469.

The protein belongs to the GMC oxidoreductase family. It depends on FAD as a cofactor.

It localises to the cell inner membrane. It catalyses the reaction a primary alcohol + A = an aldehyde + AH2. Converts aliphatic medium-chain-length alcohols into aldehydes. May be linked to the electron transfer chain. This Pseudomonas putida (Arthrobacter siderocapsulatus) protein is Alcohol dehydrogenase [acceptor] (alkJ).